The primary structure comprises 412 residues: CapZ-interacting protein (412 aa).

Disordered regions lie at residues 1–84 and 99–412; these read MEER…KSSP and ALLP…DTRM. Over residues 7-20 the composition is skewed to polar residues; that stretch reads ETNSNVDSSAQPSV. Phosphoserine is present on residues Ser68, Ser82, Ser83, Ser105, Ser108, Ser116, Ser120, and Ser123. Thr124 carries the post-translational modification Phosphothreonine. Phosphoserine occurs at positions 126, 127, 135, and 143. A compositionally biased stretch (basic residues) spans 159–176; sequence VRTRGSIKRRPPSRRFRR. Ser177, Ser179, and Ser216 each carry phosphoserine. Phosphothreonine is present on residues Thr243 and Thr256. Over residues 248–258 the composition is skewed to basic and acidic residues; it reads EKPEELVRTPE. Ser297 is modified (phosphoserine). 2 stretches are compositionally biased toward basic and acidic residues: residues 298–312 and 319–330; these read PREE…DTGK and SEERVADEDRLG. Phosphoserine is present on residues Ser333 and Ser401.

As to quaternary structure, interacts with CAPZA2 and CAPZB. Dephosphorylation results in its dissociation from CAPZA2.

Stress-induced phosphorylation of CAPZIP may regulate the ability of F-actin-capping protein to remodel actin filament assembly. The chain is CapZ-interacting protein (Rcsd1) from Mus musculus (Mouse).